A 309-amino-acid chain; its full sequence is Homoserine kinase (309 aa).

Residue 91–101 (PIGSGLGSSAC) coordinates ATP.

Belongs to the GHMP kinase family. Homoserine kinase subfamily.

The protein localises to the cytoplasm. The catalysed reaction is L-homoserine + ATP = O-phospho-L-homoserine + ADP + H(+). It participates in amino-acid biosynthesis; L-threonine biosynthesis; L-threonine from L-aspartate: step 4/5. In terms of biological role, catalyzes the ATP-dependent phosphorylation of L-homoserine to L-homoserine phosphate. This Salmonella dublin (strain CT_02021853) protein is Homoserine kinase.